A 122-amino-acid polypeptide reads, in one-letter code: MARIAGVNIPTNKRVIIALTYIHGIGRTTAVKIADKLGIDHARRVQDLTDEEVLRLRETIDEDLMVEGDLRRETAMNIKRLMDLKSYRGLRHRNGLPVRGQRTHTNARTRKGKAKPIAGKKK.

Positions histidine 92 to lysine 122 are disordered. Residues glutamine 101–lysine 122 are compositionally biased toward basic residues.

The protein belongs to the universal ribosomal protein uS13 family. As to quaternary structure, part of the 30S ribosomal subunit. Forms a loose heterodimer with protein S19. Forms two bridges to the 50S subunit in the 70S ribosome.

Its function is as follows. Located at the top of the head of the 30S subunit, it contacts several helices of the 16S rRNA. In the 70S ribosome it contacts the 23S rRNA (bridge B1a) and protein L5 of the 50S subunit (bridge B1b), connecting the 2 subunits; these bridges are implicated in subunit movement. Contacts the tRNAs in the A and P-sites. This Erythrobacter litoralis (strain HTCC2594) protein is Small ribosomal subunit protein uS13.